We begin with the raw amino-acid sequence, 434 residues long: Tol-Pal system protein TolB (434 aa).

Positions 1–21 (MIVRRALALAALALAASPALA) are cleaved as a signal peptide. The tract at residues 411 to 434 (GDRQTPVTSGKTDLAAPAWGPLAP) is disordered.

The protein belongs to the TolB family. As to quaternary structure, the Tol-Pal system is composed of five core proteins: the inner membrane proteins TolA, TolQ and TolR, the periplasmic protein TolB and the outer membrane protein Pal. They form a network linking the inner and outer membranes and the peptidoglycan layer.

Its subcellular location is the periplasm. Functionally, part of the Tol-Pal system, which plays a role in outer membrane invagination during cell division and is important for maintaining outer membrane integrity. In Anaeromyxobacter sp. (strain K), this protein is Tol-Pal system protein TolB.